The sequence spans 362 residues: Type-1 angiotensin II receptor A (362 aa).

Residues 1–26 (MSNASTVETSDVERIAVNCSKSGMHN) lie on the Extracellular side of the membrane. N3 and N18 each carry an N-linked (GlcNAc...) asparagine glycan. Cystine bridges form between C19/C273 and C102/C181. A helical transmembrane segment spans residues 27–56 (YIFIAIPIIYSTIFVVGVFGNSMVVIVIYS). Topologically, residues 57–62 (YMKMKT) are cytoplasmic. A helical membrane pass occupies residues 63–90 (VASIFLMNLALSDLCFVITLPLWAAYTA). Residues 91 to 99 (MHYHWPFGN) lie on the Extracellular side of the membrane. Residues 100–126 (FLCKVASTAITLNLYTTVFLLTCLSID) form a helical membrane-spanning segment. Residues 127-142 (RYSAIVHPMKSRIWRT) are Cytoplasmic-facing. The chain crosses the membrane as a helical span at residues 143-166 (AMVARLTCVGIWLVAFLASMPSII). The Extracellular portion of the chain corresponds to 167–191 (YRQIYLFHDTNQTVCAIVYDSGHIY). R168 lines the angiotensin II pocket. N-linked (GlcNAc...) asparagine glycosylation is present at N177. Positions 185 and 200 each coordinate angiotensin II. A helical transmembrane segment spans residues 192–217 (FMVGMSLAKNIVGFLIPFLIILTSYT). Over 218 to 238 (LIGKTLKEVYRAQRARNDDIF) the chain is Cytoplasmic. The helical transmembrane segment at 239-267 (KMIVAVVLLFFFCWIPYQVFTFLDVLIQM) threads the bilayer. Residues 268 to 277 (DVIQNCKMYD) lie on the Extracellular side of the membrane. Residues 278–303 (IVDTGMPITICIAYFNSCLNPFLYGF) form a helical membrane-spanning segment. At 304 to 362 (FGKNFRKHFLQLIKYIPPKMRTHASVNTKSSLVSSSLSDTKRASKKIALQMTDNEEHCK) the chain is on the cytoplasmic side. C361 carries S-palmitoyl cysteine lipidation.

It belongs to the G-protein coupled receptor 1 family. Post-translationally, C-terminal Ser or Thr residues may be phosphorylated. As to expression, expressed in lung, liver, kidney, and spleen, with highest expression in the heart.

It is found in the cell membrane. In terms of biological role, receptor for angiotensin II, a vasoconstricting peptide, which acts as a key regulator of blood pressure and sodium retention by the kidney. The activated receptor in turn couples to G-alpha proteins G(q) (GNAQ, GNA11, GNA14 or GNA15) and thus activates phospholipase C and increases the cytosolic Ca(2+) concentrations, which in turn triggers cellular responses such as stimulation of protein kinase C. This Xenopus laevis (African clawed frog) protein is Type-1 angiotensin II receptor A (agtr1-a).